The following is a 412-amino-acid chain: NAD-dependent dihydropyrimidine dehydrogenase subunit PreT (412 aa).

E286 is an NAD(+) binding site.

The protein belongs to the NADH dehydrogenase family. In terms of assembly, heterotetramer of 2 PreA and 2 PreT subunits.

It carries out the reaction 5,6-dihydrouracil + NAD(+) = uracil + NADH + H(+). It catalyses the reaction 5,6-dihydrothymine + NAD(+) = thymine + NADH + H(+). In terms of biological role, involved in pyrimidine base degradation. Catalyzes physiologically the reduction of uracil to 5,6-dihydrouracil (DHU) by using NADH as a specific cosubstrate. It also catalyzes the reverse reaction and the reduction of thymine to 5,6-dihydrothymine (DHT). The protein is NAD-dependent dihydropyrimidine dehydrogenase subunit PreT (preT) of Escherichia coli (strain K12).